A 252-amino-acid polypeptide reads, in one-letter code: Phosphoglycolate phosphatase (252 aa).

D13 (nucleophile) is an active-site residue. The Mg(2+) site is built by D13, D15, and D192.

It belongs to the HAD-like hydrolase superfamily. CbbY/CbbZ/Gph/YieH family. Monomer. Requires Mg(2+) as cofactor. Chloride serves as cofactor.

It carries out the reaction 2-phosphoglycolate + H2O = glycolate + phosphate. Its pathway is organic acid metabolism; glycolate biosynthesis; glycolate from 2-phosphoglycolate: step 1/1. Specifically catalyzes the dephosphorylation of 2-phosphoglycolate. Is involved in the dissimilation of the intracellular 2-phosphoglycolate formed during the DNA repair of 3'-phosphoglycolate ends, a major class of DNA lesions induced by oxidative stress. The protein is Phosphoglycolate phosphatase of Shigella boydii serotype 4 (strain Sb227).